Consider the following 497-residue polypeptide: PHD finger protein 10 (497 aa).

Residues 1–61 form a disordered region; sequence MAAAGPGAAL…SSRSCETSSQ (61 aa). Residues Ser11, Ser35, and Ser49 each carry the phosphoserine modification. Positions 88-184 are essential to induce neural progenitor proliferation; it reads MLQEQVSEYL…HYKEYSQMQQ (97 aa). Residues 88–294 are SAY; that stretch reads MLQEQVSEYL…PPLDPELPAL (207 aa). Lys240 participates in a covalent cross-link: Glycyl lysine isopeptide (Lys-Gly) (interchain with G-Cter in SUMO2). Ser269 carries the post-translational modification Phosphoserine. A compositionally biased stretch (low complexity) spans 284–295; it reads EPPLDPELPALD. The segment at 284–367 is disordered; sequence EPPLDPELPA…KRSVLSKSVP (84 aa). The tract at residues 291–333 is essential to induce neural progenitor proliferation; the sequence is LPALDSDGDSDDGEDGGGDEKRKNKGTSDSSSGNVSEGDSPPD. Phosphoserine is present on residues Ser296, Ser300, Ser326, and Ser330. Over residues 296–307 the composition is skewed to acidic residues; it reads SDGDSDDGEDGG. Positions 317–327 are enriched in polar residues; the sequence is TSDSSSGNVSE. Basic and acidic residues predominate over residues 344–358; that stretch reads KSKDKMATPRKDGSK. The PHD-type 1; degenerate zinc-finger motif lies at 378-435; that stretch reads LCGICLKGKESNKKGKAESLIHCSQCDNSGHPSCLDMTMELVSMIKTYPWQCMECKTC. A Glycyl lysine isopeptide (Lys-Gly) (interchain with G-Cter in SUMO2) cross-link involves residue Lys384. The PHD-type 2; degenerate zinc finger occupies 437-480; that stretch reads ICGQPHHEEEMMFCDVCDRGYHTFCVGLGAIPSGRWICDCCQRA.

It belongs to the SAYP family. Component of neural progenitors-specific chromatin remodeling complex (npBAF complex) composed of at least, ARID1A/BAF250A or ARID1B/BAF250B, SMARCD1/BAF60A, SMARCD3/BAF60C, SMARCA2/BRM/BAF190B, SMARCA4/BRG1/BAF190A, SMARCB1/BAF47, SMARCC1/BAF155, SMARCE1/BAF57, SMARCC2/BAF170, PHF10/BAF45A, ACTL6A/BAF53A and actin. Interacts with ACTL6A/BAF53A, SMARCA2/BRM/BAF190B, SMARCA4/BRG1/BAF190A and PBRM1/BAF180.

Its subcellular location is the nucleus. Functionally, involved in transcription activity regulation by chromatin remodeling. Belongs to the neural progenitors-specific chromatin remodeling complex (npBAF complex) and is required for the proliferation of neural progenitors. During neural development a switch from a stem/progenitor to a post-mitotic chromatin remodeling mechanism occurs as neurons exit the cell cycle and become committed to their adult state. The transition from proliferating neural stem/progenitor cells to post-mitotic neurons requires a switch in subunit composition of the npBAF and nBAF complexes. As neural progenitors exit mitosis and differentiate into neurons, npBAF complexes which contain ACTL6A/BAF53A and PHF10/BAF45A, are exchanged for homologous alternative ACTL6B/BAF53B and DPF1/BAF45B or DPF3/BAF45C subunits in neuron-specific complexes (nBAF). The npBAF complex is essential for the self-renewal/proliferative capacity of the multipotent neural stem cells. The nBAF complex along with CREST plays a role regulating the activity of genes essential for dendrite growth. This chain is PHD finger protein 10 (Phf10), found in Rattus norvegicus (Rat).